A 119-amino-acid polypeptide reads, in one-letter code: Beta-2-microglobulin (119 aa).

Positions 1–20 are cleaved as a signal peptide; it reads MSRSVALAVLALLSLSGLEA. The Ig-like C1-type domain maps to 25-114; the sequence is PKIQVYSRHP…VTLSGPRTVK (90 aa). A disulfide bridge connects residues cysteine 45 and cysteine 100.

It belongs to the beta-2-microglobulin family. As to quaternary structure, heterodimer of an alpha chain and a beta chain. Beta-2-microglobulin is the beta-chain of major histocompatibility complex class I molecules.

The protein resides in the secreted. Component of the class I major histocompatibility complex (MHC). Involved in the presentation of peptide antigens to the immune system. In Papio anubis (Olive baboon), this protein is Beta-2-microglobulin (B2M).